We begin with the raw amino-acid sequence, 401 residues long: S-adenosylmethionine synthase (401 aa).

His-16 contacts ATP. Asp-18 serves as a coordination point for Mg(2+). Residue Glu-44 coordinates K(+). Residues Glu-57 and Gln-109 each contribute to the L-methionine site. The segment at 109 to 119 (QSAHIAQGVDA) is flexible loop. ATP is bound by residues 174–176 (DAK), Asp-251, 257–258 (RK), Ala-274, and Lys-278. Residue Asp-251 coordinates L-methionine. Residue Lys-282 coordinates L-methionine.

The protein belongs to the AdoMet synthase family. As to quaternary structure, homotetramer; dimer of dimers. It depends on Mg(2+) as a cofactor. Requires K(+) as cofactor.

It localises to the cytoplasm. The catalysed reaction is L-methionine + ATP + H2O = S-adenosyl-L-methionine + phosphate + diphosphate. It functions in the pathway amino-acid biosynthesis; S-adenosyl-L-methionine biosynthesis; S-adenosyl-L-methionine from L-methionine: step 1/1. Functionally, catalyzes the formation of S-adenosylmethionine (AdoMet) from methionine and ATP. The overall synthetic reaction is composed of two sequential steps, AdoMet formation and the subsequent tripolyphosphate hydrolysis which occurs prior to release of AdoMet from the enzyme. This chain is S-adenosylmethionine synthase, found in Novosphingobium aromaticivorans (strain ATCC 700278 / DSM 12444 / CCUG 56034 / CIP 105152 / NBRC 16084 / F199).